The primary structure comprises 235 residues: Hydroxyacylglutathione hydrolase (235 aa).

Zn(2+) is bound by residues H53, H55, D57, H58, H109, D127, and H165.

The protein belongs to the metallo-beta-lactamase superfamily. Glyoxalase II family. Monomer. Requires Zn(2+) as cofactor.

The catalysed reaction is an S-(2-hydroxyacyl)glutathione + H2O = a 2-hydroxy carboxylate + glutathione + H(+). Its pathway is secondary metabolite metabolism; methylglyoxal degradation; (R)-lactate from methylglyoxal: step 2/2. In terms of biological role, thiolesterase that catalyzes the hydrolysis of S-D-lactoyl-glutathione to form glutathione and D-lactic acid. The chain is Hydroxyacylglutathione hydrolase from Haemophilus ducreyi (strain 35000HP / ATCC 700724).